A 624-amino-acid chain; its full sequence is Basal cell adhesion molecule (624 aa).

A signal peptide spans 1–25 (MEPPDARAGLLWLTLLLSGYSGAQA). Ig-like V-type domains follow at residues 26–136 (ELHV…SSVR) and 141–251 (PEAT…HTFR). Over 26–543 (ELHVSVPPRV…GSVAPQTAQA (518 aa)) the chain is Extracellular. Intrachain disulfides connect Cys47–Cys119, Cys166–Cys231, and Cys285–Cys331. 3 Ig-like C2-type domains span residues 268-343 (PSTT…EEVQ), 357-436 (PLEL…QSFQ), and 443-534 (PELK…FHFG). Asn315, Asn371, and Asn378 each carry an N-linked (GlcNAc...) asparagine glycan. 2 disulfide bridges follow: Cys379–Cys419 and Cys468–Cys518. The interval 477–497 (KLTWSQRGDTTPAEPPFEGRG) is disordered. Residues 544–564 (GVAVMAVAVSVGLLLLVVAAF) traverse the membrane as a helical segment. The Cytoplasmic segment spans residues 565–624 (YCMRRKGRPGCCQRAEKGAPPAREPELSHSGSERPEHTGLLMGGPSGGGRGGNGGFGDEC). The interval 574–624 (GCCQRAEKGAPPAREPELSHSGSERPEHTGLLMGGPSGGGRGGNGGFGDEC) is disordered. Positions 587-601 (REPELSHSGSERPEH) are enriched in basic and acidic residues. A phosphoserine mark is found at Ser592, Ser594, and Ser596. Residues 605 to 624 (LMGGPSGGGRGGNGGFGDEC) show a composition bias toward gly residues.

In terms of assembly, homodimer. Interacts with ITGA4:ITGB1. Interacts with spectrins SPTA1 and SPTB1.

It localises to the cell membrane. Its function is as follows. Transmembrane glycoprotein that functions as both a receptor and an adhesion molecule playing a crucial role in cell adhesion, motility, migration and invasion. Extracellular domain enables binding to extracellular matrix proteins, such as laminin, integrin and other ligands while its intracellular domain interacts with cytoskeletal proteins like hemoglobin, facilitating cell signal transduction. Serves as a receptor for laminin alpha-5/LAMA5 to promote cell adhesion. Mechanistically, JAK2 induces BCAM phosphorylation and activates its adhesion to laminin by stimulating a Rap1/AKT signaling pathway in the absence of EPOR. This Rattus norvegicus (Rat) protein is Basal cell adhesion molecule (Bcam).